Consider the following 196-residue polypeptide: MKFLNQITNYAKEAVQSAKYIGQGLSVTFDHMRRRPITVQYPYEKLIPSERFRGRIHFEFDKCIACEVCVRVCPINLPVVDWVFNKELKKKELKHYSIDFGVCIFCANCVEYCPTNCLSVTEEYELATYDRHELNYDSVAMGRIPYKVTQDPMVTPIREFAYLPAGVMSGHDLPAGAQRAGERPEAIANTAKSSEN.

2 consecutive 4Fe-4S ferredoxin-type domains span residues 54-83 (GRIH…VDWV) and 94-123 (KHYS…VTEE). Residues Cys63, Cys66, Cys69, Cys73, Cys103, Cys106, Cys109, and Cys113 each contribute to the [4Fe-4S] cluster site. Residues 174 to 196 (PAGAQRAGERPEAIANTAKSSEN) are disordered.

Belongs to the complex I 23 kDa subunit family. As to quaternary structure, NDH-1 is composed of at least 11 different subunits. [4Fe-4S] cluster serves as cofactor.

The protein localises to the cellular thylakoid membrane. It carries out the reaction a plastoquinone + NADH + (n+1) H(+)(in) = a plastoquinol + NAD(+) + n H(+)(out). The catalysed reaction is a plastoquinone + NADPH + (n+1) H(+)(in) = a plastoquinol + NADP(+) + n H(+)(out). NDH-1 shuttles electrons from an unknown electron donor, via FMN and iron-sulfur (Fe-S) centers, to quinones in the respiratory and/or the photosynthetic chain. The immediate electron acceptor for the enzyme in this species is believed to be plastoquinone. Couples the redox reaction to proton translocation, and thus conserves the redox energy in a proton gradient. The sequence is that of NAD(P)H-quinone oxidoreductase subunit I from Thermosynechococcus vestitus (strain NIES-2133 / IAM M-273 / BP-1).